A 545-amino-acid chain; its full sequence is Propane 2-monooxygenase, hydroxylase component large subunit (545 aa).

The Fe cation site is built by E97, E127, H130, E192, E226, and H229.

The protein belongs to the TmoA/XamoA family. In terms of assembly, the propane 2-monooxygenase multicomponent enzyme system is composed of an electron transfer component and a monooxygenase component interacting with the effector protein PrmD. The electron transfer component is composed of a reductase (PrmB), and the monooxygenase component is formed by a large subunit (PrmA) and a small subunit (PrmC). Probably requires the presence of the chaperonin-like protein PrmG to ensure a productive folding, resulting of a soluble PrmA, which leads to the active form of PrmABCD. The cofactor is Fe(2+).

It carries out the reaction propane + NADH + O2 + H(+) = propan-2-ol + NAD(+) + H2O. The catalysed reaction is phenol + NADH + O2 + H(+) = hydroquinone + NAD(+) + H2O. In terms of biological role, component of the propane 2-monooxygenase multicomponent enzyme system which is involved in the degradation of propane via the O2-dependent hydroxylation of propane. Under acetone induction, also able to catalyze the oxidation of phenol to yield hydroquinone. The sequence is that of Propane 2-monooxygenase, hydroxylase component large subunit from Gordonia sp. (strain TY-5).